The primary structure comprises 693 residues: Follicle-stimulating hormone receptor (693 aa).

The first 18 residues, 1-18 (MFLVFTCSLILLASCSSC), serve as a signal peptide directing secretion. Intrachain disulfides connect Cys18-Cys25 and Cys23-Cys32. An LRRNT domain is found at 19–46 (QHHTCHCAGRIFICQESKVVQLPRDIPT). Over 19-366 (QHHTCHCAGR…EDIMGYTILR (348 aa)) the chain is Extracellular. Asn47 carries an N-linked (GlcNAc...) asparagine glycan. LRR repeat units lie at residues 49 to 72 (TELRFVLTKMRVIPKGAFAGLLDL), 73 to 97 (EKIEISQNDALEVIEAKVFSNLPKL), 98 to 118 (HEIRIEKANNLVYIDQDAFQH), 119 to 143 (LPSLRYLLISNTGLRFLPVVQKVHS), 144 to 169 (FQKVLLDIQDNINIRTIERNSFMGLS), 170 to 192 (SESVILWLNKNGIQEIENHAFNG), 193 to 216 (TYLDELNLSDNQNLEKLPNEVFQG), 217 to 240 (ANGPVVLDISRTKISFLPGHGLEL), and 241 to 259 (IKKLRARSTYNLKKLPDLS). Residues Asn191 and Asn199 are each glycosylated (N-linked (GlcNAc...) asparagine). A glycan (N-linked (GlcNAc...) asparagine) is linked at Asn268. 4 cysteine pairs are disulfide-bonded: Cys275-Cys346, Cys276-Cys292, Cys276-Cys356, and Cys292-Cys338. The helical transmembrane segment at 367 to 387 (VLIWFISILAITGNIVVLIIL) threads the bilayer. The Cytoplasmic segment spans residues 388–398 (ISSQYKLTVPR). The helical transmembrane segment at 399–421 (FLMCNLAFADLCIGIYLLFIASV) threads the bilayer. At 422–443 (DIQTKSQYYNYAIDWQTGAGCN) the chain is on the extracellular side. The cysteines at positions 442 and 517 are disulfide-linked. A helical membrane pass occupies residues 444–465 (AAGFFTVFASELSVYTLTVITL). Over 466-485 (ERWHTITYAMQLDRKVRFRH) the chain is Cytoplasmic. A helical transmembrane segment spans residues 486–508 (AVIIMIFGWMFAFTVALLPIFGV). Over 509–528 (SSYMKVSICLPMDIETPFSQ) the chain is Extracellular. Residues 529-550 (AYVIFLLVLNVLAFVIICACYI) form a helical membrane-spanning segment. Residues 551-573 (CIYFTVRNPNVISSNSDTKIAKR) lie on the Cytoplasmic side of the membrane. A helical membrane pass occupies residues 574–597 (MAILIFTDFLCMAPISFFAISASL). At 598-608 (KVPLITVSKSK) the chain is on the extracellular side. The chain crosses the membrane as a helical span at residues 609–630 (ILLVLFYPINSCANPFLYAIFT). Topologically, residues 631-693 (KTFRRDFFIL…YSLVPLNHLN (63 aa)) are cytoplasmic.

This sequence belongs to the G-protein coupled receptor 1 family. FSH/LSH/TSH subfamily. As to quaternary structure, homotrimer. Functions as a homotrimer binding the FSH hormone heterodimer composed of CGA and FSHB.

Its subcellular location is the cell membrane. Functionally, g protein-coupled receptor for follitropin, the follicle-stimulating hormone. Through cAMP production activates the downstream PI3K-AKT and ERK1/ERK2 signaling pathways. In Cairina moschata (Muscovy duck), this protein is Follicle-stimulating hormone receptor (FSHR).